A 658-amino-acid chain; its full sequence is tRNA uridine 5-carboxymethylaminomethyl modification enzyme MnmG (658 aa).

13–18 (GAGHAG) provides a ligand contact to FAD. 285-299 (GPRYCPSVEDKINRF) contributes to the NAD(+) binding site.

This sequence belongs to the MnmG family. As to quaternary structure, homodimer. Heterotetramer of two MnmE and two MnmG subunits. FAD serves as cofactor.

Its subcellular location is the cytoplasm. Functionally, NAD-binding protein involved in the addition of a carboxymethylaminomethyl (cmnm) group at the wobble position (U34) of certain tRNAs, forming tRNA-cmnm(5)s(2)U34. The chain is tRNA uridine 5-carboxymethylaminomethyl modification enzyme MnmG from Verminephrobacter eiseniae (strain EF01-2).